The primary structure comprises 282 residues: Secretory carrier-associated membrane protein 1 (282 aa).

The tract at residues 1–49 (MSRYQSHSFDDGEINPFANPTSVPAATSKLSPLPPEPYDRGATMDIPLD) is disordered. Topologically, residues 1 to 117 (MSRYQSHSFD…EIPIHLQRIQ (117 aa)) are cytoplasmic. Positions 18-30 (ANPTSVPAATSKL) are enriched in polar residues. At Ser-31 the chain carries Phosphoserine. Residues 48–93 (LDSGKDLKAKEKELREKEAELKRREQEIKRKEDAIAQAGIVIEEKN) are a coiled coil. 4 helical membrane passes run 118 to 138 (YVAF…IVAV), 150 to 170 (IWFL…VMWY), 185 to 205 (FGWF…AAVA), and 233 to 253 (IFYF…IWVI). At 254-282 (QQVYMYFRGSGKAAEMKQEATRRAMMAAL) the chain is on the cytoplasmic side.

It belongs to the SCAMP family.

Its subcellular location is the cell membrane. The protein localises to the cytoplasmic vesicle. It localises to the secretory vesicle membrane. Probably involved in membrane trafficking. The polypeptide is Secretory carrier-associated membrane protein 1 (SCAMP1) (Arabidopsis thaliana (Mouse-ear cress)).